The primary structure comprises 1183 residues: SR-related and CTD-associated factor 4 (1183 aa).

The CID domain maps to 1–139; that stretch reads MDAVNAFNQE…PLLDMAAGTS (139 aa). Residue Lys49 is modified to N6-acetyllysine. Residue Ser154 is modified to Phosphoserine. 2 disordered regions span residues 299-324 and 348-561; these read VPVP…VQQP and HHQV…QIKS. Over residues 367 to 380 the composition is skewed to pro residues; that stretch reads APPPFPPMPQPGMP. Over residues 381 to 398 the composition is skewed to low complexity; the sequence is QPGMAQPGLAQPGMAQPT. The segment covering 399–410 has biased composition (pro residues); it reads MPQPGMPQPGMP. Over residues 411–428 the composition is skewed to low complexity; sequence QPGMAQPGLAQPGMAQPG. The span at 429 to 440 shows a compositional bias: pro residues; sequence MPQPAMPQPAMP. The span at 457–469 shows a compositional bias: polar residues; it reads PTFQSTFQPQNEP. Positions 488 to 498 are enriched in basic and acidic residues; that stretch reads EVKRHVPESRK. Residues 499–536 show a composition bias toward basic residues; it reads SRSRSPKRRRSRSGSRSRRSRHRRSRSRSRDRRRHSPR. Positions 538-553 are enriched in basic and acidic residues; that stretch reads RSQERRDREKERERRQ. The 75-residue stretch at 569–643 folds into the RRM domain; the sequence is TTLWVGQLDK…KSIKIAWALN (75 aa). 3 disordered regions span residues 691–722, 800–858, and 920–1183; these read WKGI…IPKP, LPPG…SLPT, and MPPH…EPPR. Ser717 carries the phosphoserine modification. 2 stretches are compositionally biased toward pro residues: residues 800–823 and 920–952; these read LPPG…PPIS and MPPH…PPHG. Residues 1006-1020 are compositionally biased toward low complexity; the sequence is SPSQQPAPAQQQPPQ. Ser1042 is subject to Phosphoserine. Basic and acidic residues predominate over residues 1047 to 1122; sequence VENDRERYGS…NRKEKHEVAD (76 aa). Polar residues predominate over residues 1136–1145; that stretch reads QVGTIDTVSE.

As to quaternary structure, interacts with POLR2A; via C-terminal heptapeptide repeat domain (CTD) phosphorylated at 'Ser-2' and 'Ser-5'.

The protein localises to the nucleus. In terms of biological role, anti-terminator protein required to prevent early mRNA termination during transcription. Together with SCAF8, acts by suppressing the use of early, alternative poly(A) sites, thereby preventing the accumulation of non-functional truncated proteins. Mechanistically, associates with the phosphorylated C-terminal heptapeptide repeat domain (CTD) of the largest RNA polymerase II subunit (POLR2A), and subsequently binds nascent RNA upstream of early polyadenylation sites to prevent premature mRNA transcript cleavage and polyadenylation. Independently of SCAF8, also acts as a suppressor of transcriptional readthrough. The polypeptide is SR-related and CTD-associated factor 4 (Mus musculus (Mouse)).